The following is a 510-amino-acid chain: ATP synthase subunit alpha 1 (510 aa).

167–174 (GDRATGKT) is a binding site for ATP.

This sequence belongs to the ATPase alpha/beta chains family. In terms of assembly, F-type ATPases have 2 components, CF(1) - the catalytic core - and CF(0) - the membrane proton channel. CF(1) has five subunits: alpha(3), beta(3), gamma(1), delta(1), epsilon(1). CF(0) has three main subunits: a(1), b(2) and c(9-12). The alpha and beta chains form an alternating ring which encloses part of the gamma chain. CF(1) is attached to CF(0) by a central stalk formed by the gamma and epsilon chains, while a peripheral stalk is formed by the delta and b chains.

It is found in the cell inner membrane. It carries out the reaction ATP + H2O + 4 H(+)(in) = ADP + phosphate + 5 H(+)(out). Produces ATP from ADP in the presence of a proton gradient across the membrane. The alpha chain is a regulatory subunit. The protein is ATP synthase subunit alpha 1 of Paraburkholderia xenovorans (strain LB400).